The following is a 169-amino-acid chain: PTS system glucose-specific EIIA component (169 aa).

Positions 39-143 (DVVFAEKIVG…STLTPVVISN (105 aa)) constitute a PTS EIIA type-1 domain. The Zn(2+) site is built by histidine 76 and histidine 91. Catalysis depends on histidine 91, which acts as the Tele-phosphohistidine intermediate; for EIIA activity. Residue histidine 91 is modified to Phosphohistidine; by HPr.

In terms of assembly, heterodimer with glycerol kinase (glpk). Zn(2+) is required as a cofactor.

It localises to the cytoplasm. Functionally, the phosphoenolpyruvate-dependent sugar phosphotransferase system (sugar PTS), a major carbohydrate active transport system, catalyzes the phosphorylation of incoming sugar substrates concomitantly with their translocation across the cell membrane. The enzyme II complex composed of PtsG and Crr is involved in glucose transport. The sequence is that of PTS system glucose-specific EIIA component (crr) from Salmonella typhi.